A 269-amino-acid chain; its full sequence is Imidazole glycerol phosphate synthase subunit HisF (269 aa).

Catalysis depends on residues aspartate 23 and aspartate 142.

Belongs to the HisA/HisF family. In terms of assembly, heterodimer of HisH and HisF.

The protein resides in the cytoplasm. The catalysed reaction is 5-[(5-phospho-1-deoxy-D-ribulos-1-ylimino)methylamino]-1-(5-phospho-beta-D-ribosyl)imidazole-4-carboxamide + L-glutamine = D-erythro-1-(imidazol-4-yl)glycerol 3-phosphate + 5-amino-1-(5-phospho-beta-D-ribosyl)imidazole-4-carboxamide + L-glutamate + H(+). The protein operates within amino-acid biosynthesis; L-histidine biosynthesis; L-histidine from 5-phospho-alpha-D-ribose 1-diphosphate: step 5/9. Functionally, IGPS catalyzes the conversion of PRFAR and glutamine to IGP, AICAR and glutamate. The HisF subunit catalyzes the cyclization activity that produces IGP and AICAR from PRFAR using the ammonia provided by the HisH subunit. In Bordetella pertussis (strain Tohama I / ATCC BAA-589 / NCTC 13251), this protein is Imidazole glycerol phosphate synthase subunit HisF.